The sequence spans 256 residues: Ciliary microtubule associated protein 1A (256 aa).

3 STPGR repeats span residues 66-92 (PGPGYLVPSNITVKGKDGTPAYSIYGR), 181-206 (PGPGTYRVIDPGTYKHKPPQYSMTAR), and 217-242 (PGPGAYSPEKVVMSKAQAPNFSFGIR). Residues 91 to 115 (GRPRDISSFRTPGPGSYSPERAGKS) form a disordered region.

It belongs to the CIMAP family.

The protein localises to the cytoplasm. Its subcellular location is the cytoskeleton. It is found in the flagellum axoneme. In terms of biological role, outer dense fibers are filamentous structures located on the outside of the axoneme in the midpiece and principal piece of the mammalian sperm tail. May help to maintain the passive elastic structures and elastic recoil of the sperm tail. This chain is Ciliary microtubule associated protein 1A (cimap1a), found in Xenopus laevis (African clawed frog).